A 509-amino-acid polypeptide reads, in one-letter code: Type II methyltransferase M.BsoBI (509 aa).

This sequence belongs to the N(4)/N(6)-methyltransferase family. N(4) subfamily.

It catalyses the reaction a 2'-deoxycytidine in DNA + S-adenosyl-L-methionine = an N(4)-methyl-2'-deoxycytidine in DNA + S-adenosyl-L-homocysteine + H(+). In terms of biological role, an alpha subtype methylase that recognizes the double-stranded sequence 5'-CYCGRG-3', methylates C-1 on both strands, and protects the DNA from cleavage by the BsoBI endonuclease. The polypeptide is Type II methyltransferase M.BsoBI (Geobacillus stearothermophilus (Bacillus stearothermophilus)).